A 420-amino-acid polypeptide reads, in one-letter code: Gamma-glutamyl phosphate reductase (420 aa).

Belongs to the gamma-glutamyl phosphate reductase family.

It localises to the cytoplasm. It catalyses the reaction L-glutamate 5-semialdehyde + phosphate + NADP(+) = L-glutamyl 5-phosphate + NADPH + H(+). The protein operates within amino-acid biosynthesis; L-proline biosynthesis; L-glutamate 5-semialdehyde from L-glutamate: step 2/2. Catalyzes the NADPH-dependent reduction of L-glutamate 5-phosphate into L-glutamate 5-semialdehyde and phosphate. The product spontaneously undergoes cyclization to form 1-pyrroline-5-carboxylate. In Pasteurella multocida (strain Pm70), this protein is Gamma-glutamyl phosphate reductase.